We begin with the raw amino-acid sequence, 70 residues long: Toxin Isom2 (70 aa).

In terms of domain architecture, LCN-type CS-alpha/beta spans 2-65 (KNGYAVDSSG…ISDTRKKYCD (64 aa)). 4 cysteine pairs are disulfide-bonded: cysteine 16–cysteine 37, cysteine 22–cysteine 42, cysteine 26–cysteine 44, and cysteine 38–cysteine 64.

Expressed by the venom gland.

It is found in the secreted. Functionally, excitatory insect beta-toxins induce a spastic paralysis. They bind voltage-independently at site-4 of sodium channels (Nav) and shift the voltage of activation toward more negative potentials thereby affecting sodium channel activation and promoting spontaneous and repetitive firing. The chain is Toxin Isom2 from Isometrus vittatus (Bark scorpion).